We begin with the raw amino-acid sequence, 213 residues long: Redox-sensing transcriptional repressor Rex (213 aa).

A DNA-binding region (H-T-H motif) is located at residues 16-55; that stretch reads IYYRYLRLLSNSGKNRVSSTELAEAVKVDSATIRRDFSYF. 90 to 95 contacts NAD(+); it reads GVGNLG.

Belongs to the transcriptional regulatory Rex family. In terms of assembly, homodimer.

Its subcellular location is the cytoplasm. Its function is as follows. Modulates transcription in response to changes in cellular NADH/NAD(+) redox state. The protein is Redox-sensing transcriptional repressor Rex of Ligilactobacillus salivarius (strain UCC118) (Lactobacillus salivarius).